The primary structure comprises 346 residues: MSADTETLARKVREEVIKPEQSTLISPDRQSPSLLRREATVEPRFELFHFVFSVCSQKVRGTLMEKGVTFGSNELTILPPQNENYCPQYVRLRLRSEAAAKHRPVSSFTGQSSVDSEGFDPLVVPTLVDHETGRILADSKAICLYLCDALSGGTDLLPADIREAVLKQVQLADTTPHVALLYGADPDGDRRPESMQAVMPGIHAHKIDAVRRNIPLADGDPLLLEAYQHKIVKEEAAASFVINEPQMRTAISKAEQLVTDLDRDLGASTGPWLFGDRFTLADLFWAVSLYRFLWLGYSGFWKDGAGKPRVEAYANRLFARPSVKDAIIQWPGHPPSENVIHLLSNA.

Positions 43 to 154 (PRFELFHFVF…YLCDALSGGT (112 aa)) constitute a GST N-terminal domain. Residues 189 to 335 (DRRPESMQAV…AIIQWPGHPP (147 aa)) form the GST C-terminal domain.

It belongs to the GST superfamily.

The enzyme catalyses 2,5-dichlorohydroquinone + 2 glutathione = chlorohydroquinone + glutathione disulfide + chloride + H(+). It catalyses the reaction chlorohydroquinone + 2 glutathione = hydroquinone + glutathione disulfide + chloride + H(+). It functions in the pathway xenobiotic degradation; gamma-hexachlorocyclohexane degradation. Its function is as follows. Catalyzes the degradation of 2,5-dichlorohydroquinone (2,5-DCHQ) into hydroquinone (HQ) via chlorohydroquinone (CHQ). Is involved in the degradation pathway that allows S.japonicum UT26 to grow on gamma-hexachlorocyclohexane (gamma-HCH or lindane) as the sole source of carbon and energy. However, the conversion of CHQ to HQ by LinD seems not to be essential for this degradation pathway, because the conversion rate of CHQ to HQ is much lower than that of 2,5-DCHQ to CHQ. CHQ is more efficiently degraded by LinE in strain UT26. This Sphingobium indicum (strain DSM 16413 / CCM 7287 / MTCC 6362 / UT26 / NBRC 101211 / UT26S) (Sphingobium japonicum) protein is 2,5-dichlorohydroquinone reductive dechlorinase.